We begin with the raw amino-acid sequence, 499 residues long: Interleukin-17 receptor B (499 aa).

A signal peptide spans Met1–Pro17. The Extracellular portion of the chain corresponds to Arg18–Gly286. Asn67, Asn103, Asn156, and Asn197 each carry an N-linked (GlcNAc...) asparagine glycan. A helical membrane pass occupies residues Trp287–Leu307. Residues Thr308–Leu499 are Cytoplasmic-facing. Residues Leu328 to Thr474 form the SEFIR domain.

As to quaternary structure, interacts with DAZAP2. Interacts with TRAF3IP2. As to expression, liver and testis. Expressed at lower level in kidney and lung. Expressed in selected T-cell, B-cell and myeloid cell lines.

It is found in the cell membrane. It localises to the secreted. Receptor for the pro-inflammatory cytokines IL17B and IL17E. May play a role in controlling the growth and/or differentiation of hematopoietic cells. The protein is Interleukin-17 receptor B (Il17rb) of Mus musculus (Mouse).